Consider the following 370-residue polypeptide: Histidinol-phosphate aminotransferase 2 (370 aa).

K230 carries the N6-(pyridoxal phosphate)lysine modification.

Belongs to the class-II pyridoxal-phosphate-dependent aminotransferase family. Histidinol-phosphate aminotransferase subfamily. As to quaternary structure, homodimer. It depends on pyridoxal 5'-phosphate as a cofactor.

It carries out the reaction L-histidinol phosphate + 2-oxoglutarate = 3-(imidazol-4-yl)-2-oxopropyl phosphate + L-glutamate. Its pathway is amino-acid biosynthesis; L-histidine biosynthesis; L-histidine from 5-phospho-alpha-D-ribose 1-diphosphate: step 7/9. The protein is Histidinol-phosphate aminotransferase 2 of Pseudomonas fluorescens (strain Pf0-1).